Here is a 599-residue protein sequence, read N- to C-terminus: Elongation factor 4 (599 aa).

The tr-type G domain occupies 4 to 186 (KFIRNFSIIA…AIIKHVPPPL (183 aa)). GTP-binding positions include 16-21 (DHGKST) and 133-136 (NKID).

This sequence belongs to the TRAFAC class translation factor GTPase superfamily. Classic translation factor GTPase family. LepA subfamily.

The protein localises to the cell membrane. It catalyses the reaction GTP + H2O = GDP + phosphate + H(+). Functionally, required for accurate and efficient protein synthesis under certain stress conditions. May act as a fidelity factor of the translation reaction, by catalyzing a one-codon backward translocation of tRNAs on improperly translocated ribosomes. Back-translocation proceeds from a post-translocation (POST) complex to a pre-translocation (PRE) complex, thus giving elongation factor G a second chance to translocate the tRNAs correctly. Binds to ribosomes in a GTP-dependent manner. The protein is Elongation factor 4 of Ureaplasma parvum serovar 3 (strain ATCC 27815 / 27 / NCTC 11736).